The primary structure comprises 254 residues: Proteasome activator complex subunit 3 (254 aa).

Residue alanine 2 is modified to N-acetylalanine. Phosphoserine is present on residues serine 17 and serine 24. Lysine 195 is modified (N6-acetyllysine; by P300/CBP). Phosphoserine; by CHEK2 is present on serine 247.

This sequence belongs to the PA28 family. In terms of assembly, homoheptamer; the stability of the heptamer is essential for the specific activation of the trypsine-like subunit and inhibition of the chymotrypsin-like and postglutamyl-preferring (PGPH) subunits of the proteasome. Interacts with p53/TP53 and MDM2. Interacts with MAP3K3. Associates with the proteasome. Interacts with CCAR2. Interacts with PSME3IP1 (via C-terminus); the interaction is direct and promotes the association of PSME3 with the 20S proteasome. Interacts with COIL; the interaction is inhibited by PSME3IP1. As to quaternary structure, (Microbial infection) Interacts with human cytomegalovirus UL27. Post-translationally, phosphorylated by MAP3K3. Phosphorylation at Ser-247 promotes its association with CCAR2. Acetylation at the major site Lys-195 is important for oligomerization and ability to degrade its target substrates. Deacetylated by SIRT1.

It localises to the nucleus. The protein resides in the cytoplasm. Subunit of the 11S REG-gamma (also called PA28-gamma) proteasome regulator, a doughnut-shaped homoheptamer which associates with the proteasome. 11S REG-gamma activates the trypsin-like catalytic subunit of the proteasome but inhibits the chymotrypsin-like and postglutamyl-preferring (PGPH) subunits. Facilitates the MDM2-p53/TP53 interaction which promotes ubiquitination- and MDM2-dependent proteasomal degradation of p53/TP53, limiting its accumulation and resulting in inhibited apoptosis after DNA damage. May also be involved in cell cycle regulation. Mediates CCAR2 and CHEK2-dependent SIRT1 inhibition. In Homo sapiens (Human), this protein is Proteasome activator complex subunit 3 (PSME3).